The chain runs to 1077 residues: Teashirt homolog 1-B (1077 aa).

Disordered regions lie at residues 1–110 (MPRR…NASY) and 142–179 (NEKA…SCTN). Residues 26–36 (TEEDNLEDDGL) show a composition bias toward acidic residues. A compositionally biased stretch (polar residues) spans 56-69 (TQSYQNSPISSATN). A compositionally biased stretch (low complexity) spans 160 to 179 (SGPTSDPGTPTTITSSSCTN). The segment at 248 to 272 (FRCKDCSAAYDTLVELTVHMNETGH) adopts a C2H2-type 1 zinc-finger fold. Over residues 274–286 (RDDNRDREAERTK) the composition is skewed to basic and acidic residues. The segment at 274 to 300 (RDDNRDREAERTKRWSKPRKRSLMEME) is disordered. A C2H2-type 2 zinc finger spans residues 309 to 333 (LKCMYCGHSFESLQDLSVHMIKTKH). Residues 362 to 394 (ALPDSPEQAGISPGASVSESAKDPKAANPYVTP) are disordered. The C2H2-type 3 zinc finger occupies 418–442 (LKCMECGSSHDTLQQLTAHMMVTGH). 2 disordered regions span residues 473–530 (PPTT…KIEP) and 849–873 (GRLT…SSFE). A compositionally biased stretch (basic and acidic residues) spans 497-529 (HSEEKKDPEKEKVNIGEVEKKIKEENEDPEKIE). Over residues 853–862 (PKSSTPSTVS) the composition is skewed to polar residues. The homeobox DNA-binding region spans 885 to 955 (RKGRQSNWNP…NVKYQLRRTG (71 aa)). 2 C2H2-type zinc fingers span residues 970 to 992 (FFCN…LETH) and 1037 to 1060 (FQCK…SKTH).

This sequence belongs to the teashirt C2H2-type zinc-finger protein family.

It is found in the nucleus. Its function is as follows. Probable transcriptional regulator involved in developmental processes. May act as a transcriptional repressor (Potential). Involved in two major neuronal regionalization processes: primary anteroposterior (AP) axis patterning of the CNS and segmentation of the cranial neuronal crest (CNS) development. The polypeptide is Teashirt homolog 1-B (tshz1-b) (Xenopus laevis (African clawed frog)).